The chain runs to 260 residues: uncharacterized protein (260 aa).

Positions 1-22 (MGYSKRFALYISILILIVMVAG) are cleaved as a signal peptide. The N-palmitoyl cysteine moiety is linked to residue C23. The S-diacylglycerol cysteine moiety is linked to residue C23.

It belongs to the staphylococcal tandem lipoprotein family.

It is found in the cell membrane. This is an uncharacterized protein from Staphylococcus aureus (strain N315).